The following is a 257-amino-acid chain: UPF0246 protein YaaA (257 aa).

The protein belongs to the UPF0246 family.

In Salmonella choleraesuis (strain SC-B67), this protein is UPF0246 protein YaaA.